The following is a 497-amino-acid chain: Cytochrome P450 71A12 (497 aa).

A helical membrane pass occupies residues 4-24; sequence ILMVSLCLTTLITLFLLKQFL. Cys439 serves as a coordination point for heme.

Belongs to the cytochrome P450 family. Heme is required as a cofactor.

It is found in the membrane. Functionally, converts indole-3-acetaldoxime to indole cyanohydrin. Involved in the biosynthetic pathway to 4-hydroxyindole-3-carbonyl nitrile (4-OH-ICN), a cyanogenic metabolite required for inducible pathogen defense. In Arabidopsis thaliana (Mouse-ear cress), this protein is Cytochrome P450 71A12 (CYP71A12).